The sequence spans 248 residues: Myelin protein P0 (248 aa).

Residues 1 to 28 (MAPGAPSSSPSPILAALLFSSLVLSPVQ) form the signal peptide. The Extracellular segment spans residues 29–155 (AIVVYTDKEV…VFEKVPTRYG (127 aa)). The region spanning 30–143 (IVVYTDKEVH…DIVGKTSQVT (114 aa)) is the Ig-like V-type domain. A disulfide bridge links Cys-50 with Cys-127. A glycan (N-linked (GlcNAc...) (complex) asparagine) is linked at Asn-122. A helical membrane pass occupies residues 156–176 (VVLGAVIGGVLGVVLLALLLF). The Cytoplasmic portion of the chain corresponds to 177–248 (YLIRYCWLRR…GLGESRKDKK (72 aa)). Ser-210 is subject to Phosphoserine; by PKC. The interval 224-248 (DHSRSTKAASEKKTKGLGESRKDKK) is disordered. Phosphoserine is present on residues Ser-226 and Ser-228. 2 positions are modified to phosphoserine; by PKC: Ser-233 and Ser-243.

This sequence belongs to the myelin P0 protein family. In terms of assembly, homodimer and homotetramer. Post-translationally, N-glycosylated; contains sulfate-substituted glycan. Found only in peripheral nervous system Schwann cells.

The protein localises to the cell membrane. Its function is as follows. Is an adhesion molecule necessary for normal myelination in the peripheral nervous system. It mediates adhesion between adjacent myelin wraps and ultimately drives myelin compaction. In Bos taurus (Bovine), this protein is Myelin protein P0 (MPZ).